Consider the following 167-residue polypeptide: Plastocyanin major isoform, chloroplastic (167 aa).

The transit peptide at 1-52 directs the protein to the chloroplast; the sequence is MASVTSATVAIPSFTGLKASTIKSSATVRIQTAAVASPKLTVKSSLKNFGVA. The transit peptide at 53-68 directs the protein to the thylakoid; the sequence is AVAAAASIALAGNAMA. One can recognise a Plastocyanin-like domain in the interval 69–167; it reads IEVLLGGGDG…AGMVGKVTVN (99 aa). The Cu cation site is built by His105, Cys152, His155, and Met160.

This sequence belongs to the plastocyanin family. It depends on Cu(2+) as a cofactor.

The protein resides in the plastid. It localises to the chloroplast thylakoid membrane. Its function is as follows. Participates in electron transfer between P700 and the cytochrome b6-f complex in photosystem I. Seems to be the major plastocyanin in Arabidopsis. The polypeptide is Plastocyanin major isoform, chloroplastic (DRT112) (Arabidopsis thaliana (Mouse-ear cress)).